A 526-amino-acid polypeptide reads, in one-letter code: GMP synthase [glutamine-hydrolyzing] (526 aa).

Residues 3 to 199 (KVAIIDFGSQ…FIKIAGCKTD (197 aa)) form the Glutamine amidotransferase type-1 domain. Cysteine 83 (nucleophile) is an active-site residue. Catalysis depends on residues histidine 174 and glutamate 176. Residues 200 to 392 (WTMNSFLDEQ…LGISDEILMR (193 aa)) form the GMPS ATP-PPase domain. 227–233 (SGGVDSS) contacts ATP.

Homodimer.

The enzyme catalyses XMP + L-glutamine + ATP + H2O = GMP + L-glutamate + AMP + diphosphate + 2 H(+). It functions in the pathway purine metabolism; GMP biosynthesis; GMP from XMP (L-Gln route): step 1/1. Functionally, catalyzes the synthesis of GMP from XMP. This is GMP synthase [glutamine-hydrolyzing] from Ehrlichia canis (strain Jake).